Here is a 466-residue protein sequence, read N- to C-terminus: Glutamate--tRNA ligase (466 aa).

Positions 10-20 match the 'HIGH' region motif; it reads PSPTGYLHVGG. 4 residues coordinate Zn(2+): cysteine 99, cysteine 101, cysteine 126, and aspartate 128. Positions 237–241 match the 'KMSKS' region motif; it reads RLSKR. Lysine 240 contributes to the ATP binding site.

The protein belongs to the class-I aminoacyl-tRNA synthetase family. Glutamate--tRNA ligase type 1 subfamily. As to quaternary structure, monomer. Zn(2+) serves as cofactor.

The protein resides in the cytoplasm. It catalyses the reaction tRNA(Glu) + L-glutamate + ATP = L-glutamyl-tRNA(Glu) + AMP + diphosphate. In terms of biological role, catalyzes the attachment of glutamate to tRNA(Glu) in a two-step reaction: glutamate is first activated by ATP to form Glu-AMP and then transferred to the acceptor end of tRNA(Glu). The sequence is that of Glutamate--tRNA ligase from Geobacter sulfurreducens (strain ATCC 51573 / DSM 12127 / PCA).